The following is a 124-amino-acid chain: Protein archease (124 aa).

Ca(2+) contacts are provided by His-7, Asp-10, Asp-123, and Thr-124.

Belongs to the archease family.

Activates the tRNA-splicing ligase complex by facilitating the enzymatic turnover of catalytic subunit RtcB. Acts by promoting the guanylylation of RtcB, a key intermediate step in tRNA ligation. Can also alter the NTP specificity of RtcB such that ATP, dGTP or ITP is used efficiently. May also act as a chaperone or modulator of proteins involved in DNA or RNA processing. The protein is Protein archease of Thermotoga maritima (strain ATCC 43589 / DSM 3109 / JCM 10099 / NBRC 100826 / MSB8).